Consider the following 840-residue polypeptide: Putative pentatricopeptide repeat-containing protein At1g31840 (840 aa).

PPR repeat units lie at residues K98–N128, D145–I179, P180–P214, G216–V250, G251–P284, N285–P319, D320–L354, D355–P389, N390–P424, S425–P459, D460–L494, N495–P529, D530–P564, D565–A599, D600–P634, D635–P669, N670–P704, N705–P739, S740–P774, and D775–P809.

This sequence belongs to the PPR family. P subfamily.

This Arabidopsis thaliana (Mouse-ear cress) protein is Putative pentatricopeptide repeat-containing protein At1g31840.